The sequence spans 511 residues: Histidine ammonia-lyase (511 aa).

The 5-imidazolinone (Ala-Gly) cross-link spans Ala142–Gly144. Position 143 is a 2,3-didehydroalanine (Ser) (Ser143).

This sequence belongs to the PAL/histidase family. Contains an active site 4-methylidene-imidazol-5-one (MIO), which is formed autocatalytically by cyclization and dehydration of residues Ala-Ser-Gly.

Its subcellular location is the cytoplasm. The catalysed reaction is L-histidine = trans-urocanate + NH4(+). It functions in the pathway amino-acid degradation; L-histidine degradation into L-glutamate; N-formimidoyl-L-glutamate from L-histidine: step 1/3. The sequence is that of Histidine ammonia-lyase from Brucella canis (strain ATCC 23365 / NCTC 10854 / RM-666).